The chain runs to 242 residues: Lysosomal membrane ascorbate-dependent ferrireductase CYB561A3 (242 aa).

At 1 to 7 (MVSGRFY) the chain is on the cytoplasmic side. Residues 8–28 (LSCLLLGSLGSMCILFTIYWM) form a helical membrane-spanning segment. The Cytochrome b561 domain occupies 12–219 (LLGSLGSMCI…FGLLVLYILL (208 aa)). Residues 29–45 (QYWRGGFAWNGSIYMFN) lie on the Lumenal side of the membrane. Asn38 is a glycosylation site (N-linked (GlcNAc...) asparagine). Residues 46–66 (WHPVLMVAGMVVFYGGASLVY) form a helical membrane-spanning segment. Heme b contacts are provided by His47 and Arg67. Over 67-83 (RLPQSWVGPKLPWKLLH) the chain is Cytoplasmic. The L-ascorbate site is built by Lys76 and Lys80. His83 provides a ligand contact to heme b. A helical membrane pass occupies residues 84–104 (AALHLMAFVLTVVGLVAVFTF). Residues 105-119 (HNHGRTANLYSLHSW) lie on the Lumenal side of the membrane. Residues 112-115 (NLYS) and His117 each bind heme b. Residues 120–140 (LGITTVFLFACQWFLGFAVFL) form a helical membrane-spanning segment. Residues 141–154 (LPWASMWLRSLLKP) are Cytoplasmic-facing. Arg149 provides a ligand contact to L-ascorbate. The chain crosses the membrane as a helical span at residues 155-175 (IHVFFGAAILSLSIASVISGI). Heme b is bound by residues His156 and Glu177. Residues 176–202 (NEKLFFSLKNTTRPYHSLPSEAVFANS) lie on the Lumenal side of the membrane. A helical transmembrane segment spans residues 203–223 (TGMLVVAFGLLVLYILLASSW). Lys224 contacts heme b. Over 224–242 (KRPEPGILTDRQPLLHDGE) the chain is Cytoplasmic.

As to quaternary structure, homodimer. Heme b serves as cofactor. Post-translationally, N-glycosylated.

It localises to the late endosome membrane. The protein localises to the lysosome membrane. The enzyme catalyses Fe(3+)(out) + L-ascorbate(in) = monodehydro-L-ascorbate radical(in) + Fe(2+)(out) + H(+). Functionally, transmembrane reductase that uses ascorbate as an electron donor in the cytoplasm and transfers electrons across membranes to reduce iron cations Fe(3+) into Fe(2+) in the lumen of the late endosome and lysosome. Reduced iron can then be extruded from the late endosome and lysosome to the cytoplasm by divalent metal-specific transporters. It is therefore most probably involved in endosomal and lysosomal cellular iron homeostasis. This is Lysosomal membrane ascorbate-dependent ferrireductase CYB561A3 from Homo sapiens (Human).